The following is a 72-amino-acid chain: Crustacean hyperglycemic hormone B (72 aa).

A Pyrrolidone carboxylic acid modification is found at Gln1. D-phenylalanine; in form CHHB-II is present on Phe3. 3 disulfide bridges follow: Cys7–Cys43, Cys23–Cys39, and Cys26–Cys52. A Valine amide modification is found at Val72.

Stereoinversion of L-Phe (in CHHB-I) to D-Phe (in CHHB-II).

It is found in the secreted. Its function is as follows. Hormone found in the sinus gland of isopods and decapods which controls the blood sugar level. Has a secretagogue action over the amylase released from the midgut gland. May act as a stress hormone and may be involved in the control of molting and reproduction. In Cherax destructor (Common yabby crayfish), this protein is Crustacean hyperglycemic hormone B.